The chain runs to 325 residues: NADH-quinone oxidoreductase subunit H (325 aa).

8 consecutive transmembrane segments (helical) span residues 11–31 (VLIAVLKAVVILVVVVVCGAL), 81–101 (MIFTLAPVIGFVSLLLAFAIV), 114–134 (IGILFFMMMAGLAVYAVLFAG), 149–169 (ASAQTLSYEVFIGLSFMGVVA), 186–206 (MWNVIPQFFGFLTFAIAGVAV), 237–257 (FFVGEYIGIVTVSALIVTMFF), 265–285 (LPPFVWFALKTAFFMVMFILI), and 304–324 (ICLPLTLLNLLATAAVILYNA).

Belongs to the complex I subunit 1 family. NDH-1 is composed of 13 different subunits. Subunits NuoA, H, J, K, L, M, N constitute the membrane sector of the complex.

The protein localises to the cell inner membrane. The catalysed reaction is a quinone + NADH + 5 H(+)(in) = a quinol + NAD(+) + 4 H(+)(out). In terms of biological role, NDH-1 shuttles electrons from NADH, via FMN and iron-sulfur (Fe-S) centers, to quinones in the respiratory chain. The immediate electron acceptor for the enzyme in this species is believed to be ubiquinone. Couples the redox reaction to proton translocation (for every two electrons transferred, four hydrogen ions are translocated across the cytoplasmic membrane), and thus conserves the redox energy in a proton gradient. This subunit may bind ubiquinone. The protein is NADH-quinone oxidoreductase subunit H of Photorhabdus laumondii subsp. laumondii (strain DSM 15139 / CIP 105565 / TT01) (Photorhabdus luminescens subsp. laumondii).